The primary structure comprises 1097 residues: Translation initiation factor IF-2 (1097 aa).

The segment at 79 to 458 is disordered; it reads LEKRVSPQAD…RVIKKKPKKA (380 aa). Residues 97–112 are compositionally biased toward basic and acidic residues; it reads AKKEASQEKADAHAKL. Residues 157 to 173 are compositionally biased toward low complexity; it reads AATLAVEEAPIAAAPTE. Basic and acidic residues-rich tracts occupy residues 174 to 190 and 202 to 221; these read EPMH…KIDS and VEVH…HAEE. The segment covering 224-236 has biased composition (low complexity); the sequence is TPTTEASSEETSA. Residues 258–267 are compositionally biased toward polar residues; the sequence is RKTQNTTNVS. Residues 268-286 are compositionally biased toward basic and acidic residues; that stretch reads EENKQHEKQPETLKSDKAM. The span at 340–363 shows a compositional bias: polar residues; it reads SDSLQAEISRQQNEISNRFSQSEN. Over residues 376–385 the composition is skewed to basic residues; the sequence is HKKKRKRKKN. Over residues 402-443 the composition is skewed to basic and acidic residues; sequence PKQEEKPVKKEKPKEREKPAAGKKEQTPGKKPVREDQKERVL. Residues 591-761 form the tr-type G domain; it reads TRPPVVTIMG…LVEAELLELK (171 aa). Positions 600–607 are G1; the sequence is GHVDHGKT. Residue 600-607 participates in GTP binding; sequence GHVDHGKT. The G2 stretch occupies residues 625 to 629; the sequence is GITQH. A G3 region spans residues 647–650; that stretch reads DTPG. GTP-binding positions include 647–651 and 701–704; these read DTPGH and NKID. Positions 701-704 are G4; that stretch reads NKID. Positions 737 to 739 are G5; sequence SAK.

The protein belongs to the TRAFAC class translation factor GTPase superfamily. Classic translation factor GTPase family. IF-2 subfamily.

The protein resides in the cytoplasm. Functionally, one of the essential components for the initiation of protein synthesis. Protects formylmethionyl-tRNA from spontaneous hydrolysis and promotes its binding to the 30S ribosomal subunits. Also involved in the hydrolysis of GTP during the formation of the 70S ribosomal complex. This is Translation initiation factor IF-2 from Chloroherpeton thalassium (strain ATCC 35110 / GB-78).